Here is a 314-residue protein sequence, read N- to C-terminus: tRNA pseudouridine synthase B (314 aa).

Histidine 43 is a substrate binding site. Aspartate 48 functions as the Nucleophile in the catalytic mechanism. Substrate is bound by residues tyrosine 76, tyrosine 179, and leucine 200.

The protein belongs to the pseudouridine synthase TruB family. Type 1 subfamily.

It carries out the reaction uridine(55) in tRNA = pseudouridine(55) in tRNA. Responsible for synthesis of pseudouridine from uracil-55 in the psi GC loop of transfer RNAs. The sequence is that of tRNA pseudouridine synthase B from Shigella flexneri.